The sequence spans 393 residues: Serine/threonine-protein phosphatase 2A activator 1 (393 aa).

Residues 328-393 (EKEEESIEQA…TSFSRDRLRR (66 aa)) are disordered. 2 stretches are compositionally biased toward polar residues: residues 335-356 (EQAN…TSTS) and 365-386 (SGNN…QTSF). S341 is modified (phosphoserine).

Belongs to the PTPA-type PPIase family. In terms of assembly, interacts with the phosphatase PP2A-like catalytic subunits PPG1, PPH3 and SIT4. Forms a ternary complex with SIT4-TAP42.

Its subcellular location is the cytoplasm. The protein localises to the nucleus. It carries out the reaction [protein]-peptidylproline (omega=180) = [protein]-peptidylproline (omega=0). Functionally, PPIases accelerate the folding of proteins. It catalyzes the cis-trans isomerization of proline imidic peptide bonds in oligopeptides. Acts as a regulatory subunit for TAP42-associated PP2A-like phosphatases modulating their activity or substrate specificity, probably by inducing a conformational change in the catalytic subunit, a direct target of the PPIase. Can reactivate inactive phosphatase PP2A-phosphatase methylesterase complexes (PP2Ai) in presence of ATP and Mg(2+) by dissociating the inactive form from the complex. Involved in the regulation of cell cycle progression, mitotic spindle formation, bud morphogenesis and DNA repair. The chain is Serine/threonine-protein phosphatase 2A activator 1 (RRD1) from Saccharomyces cerevisiae (strain ATCC 204508 / S288c) (Baker's yeast).